Consider the following 382-residue polypeptide: Galactokinase (382 aa).

34 to 37 (EHTD) contributes to the substrate binding site. Residue 124-130 (GAGLSSS) coordinates ATP. Mg(2+) contacts are provided by Ser130 and Glu162. Catalysis depends on Asp174, which acts as the Proton acceptor. Tyr223 contributes to the substrate binding site.

The protein belongs to the GHMP kinase family. GalK subfamily.

The protein resides in the cytoplasm. It carries out the reaction alpha-D-galactose + ATP = alpha-D-galactose 1-phosphate + ADP + H(+). Its pathway is carbohydrate metabolism; galactose metabolism. Functionally, catalyzes the transfer of the gamma-phosphate of ATP to D-galactose to form alpha-D-galactose-1-phosphate (Gal-1-P). The sequence is that of Galactokinase from Citrobacter koseri (strain ATCC BAA-895 / CDC 4225-83 / SGSC4696).